The chain runs to 64 residues: Large ribosomal subunit protein bL35 (64 aa).

The segment at 1-29 is disordered; the sequence is MPKMKTHSGAKKRFKLTGSGKLRRQQANR.

Belongs to the bacterial ribosomal protein bL35 family.

This Pseudarthrobacter chlorophenolicus (strain ATCC 700700 / DSM 12829 / CIP 107037 / JCM 12360 / KCTC 9906 / NCIMB 13794 / A6) (Arthrobacter chlorophenolicus) protein is Large ribosomal subunit protein bL35.